Consider the following 318-residue polypeptide: UDP-N-acetylenolpyruvoylglucosamine reductase (318 aa).

Residues Ile38–Gly204 enclose the FAD-binding PCMH-type domain. Arg182 is an active-site residue. Over residues Ser212 to Lys229 the composition is skewed to basic and acidic residues. Residues Ser212–Gly232 form a disordered region. Residue Ser233 is the Proton donor of the active site. Glu310 is an active-site residue.

It belongs to the MurB family. It depends on FAD as a cofactor.

The protein localises to the cytoplasm. The catalysed reaction is UDP-N-acetyl-alpha-D-muramate + NADP(+) = UDP-N-acetyl-3-O-(1-carboxyvinyl)-alpha-D-glucosamine + NADPH + H(+). The protein operates within cell wall biogenesis; peptidoglycan biosynthesis. In terms of biological role, cell wall formation. This chain is UDP-N-acetylenolpyruvoylglucosamine reductase, found in Leptospira interrogans serogroup Icterohaemorrhagiae serovar copenhageni (strain Fiocruz L1-130).